Consider the following 683-residue polypeptide: DNA ligase 2 (683 aa).

NAD(+) is bound by residues 27-31, 76-77, and E106; these read DGEFD and SL. K108 (N6-AMP-lysine intermediate) is an active-site residue. NAD(+) contacts are provided by R129, E169, K285, and K309. Residues C403, C406, C422, and C428 each coordinate Zn(2+). One can recognise a BRCT domain in the interval 592 to 681; it reads SIERTLEGLS…PAAVAAEEPE (90 aa).

The protein belongs to the NAD-dependent DNA ligase family. LigA subfamily. Requires Mg(2+) as cofactor. Mn(2+) serves as cofactor.

It catalyses the reaction NAD(+) + (deoxyribonucleotide)n-3'-hydroxyl + 5'-phospho-(deoxyribonucleotide)m = (deoxyribonucleotide)n+m + AMP + beta-nicotinamide D-nucleotide.. Its function is as follows. DNA ligase that catalyzes the formation of phosphodiester linkages between 5'-phosphoryl and 3'-hydroxyl groups in double-stranded DNA using NAD as a coenzyme and as the energy source for the reaction. It is essential for DNA replication and repair of damaged DNA. In Nocardia farcinica (strain IFM 10152), this protein is DNA ligase 2.